The chain runs to 225 residues: PKHD-type hydroxylase YbiX (225 aa).

The region spanning 78–177 (TLSTPLFNRY…RVASFMWIQS (100 aa)) is the Fe2OG dioxygenase domain. Positions 96, 98, and 158 each coordinate Fe cation. Arg-168 lines the 2-oxoglutarate pocket.

Requires Fe(2+) as cofactor. The cofactor is L-ascorbate.

This Escherichia coli O7:K1 (strain IAI39 / ExPEC) protein is PKHD-type hydroxylase YbiX.